A 300-amino-acid polypeptide reads, in one-letter code: Jacalin-related lectin 32 (300 aa).

Ala-2 bears the N-acetylalanine mark. Jacalin-type lectin domains follow at residues Ala-2–Thr-146 and Ala-154–Pro-297.

This sequence belongs to the jacalin lectin family.

Involved in gametophytic development. This is Jacalin-related lectin 32 (JAL32) from Arabidopsis thaliana (Mouse-ear cress).